The chain runs to 129 residues: MTDEWLDTINWSVDGLIPVIAQDENGGKILMVAWMNRDALKRTVETGEAVYWSRSRKKLWHKGEESGHTQIVQAIHLDCDKDVLLLSVEQKGGIACHTGRQSCFFRQLKNGEWVITEPVIKDPSQIYTQ.

Residue D78 coordinates Mg(2+). A Zn(2+)-binding site is contributed by C79. The Mg(2+) site is built by D80 and D82. Zn(2+)-binding residues include C96 and C103.

The protein belongs to the PRA-CH family. Homodimer. Requires Mg(2+) as cofactor. The cofactor is Zn(2+).

The protein localises to the cytoplasm. The catalysed reaction is 1-(5-phospho-beta-D-ribosyl)-5'-AMP + H2O = 1-(5-phospho-beta-D-ribosyl)-5-[(5-phospho-beta-D-ribosylamino)methylideneamino]imidazole-4-carboxamide. It functions in the pathway amino-acid biosynthesis; L-histidine biosynthesis; L-histidine from 5-phospho-alpha-D-ribose 1-diphosphate: step 3/9. Functionally, catalyzes the hydrolysis of the adenine ring of phosphoribosyl-AMP. The sequence is that of Phosphoribosyl-AMP cyclohydrolase from Nitrosomonas eutropha (strain DSM 101675 / C91 / Nm57).